A 92-amino-acid polypeptide reads, in one-letter code: N(2)-fixation sustaining protein CowN (92 aa).

The protein belongs to the CowN family.

In terms of biological role, is required to sustain N(2)-dependent growth in the presence of low levels of carbon monoxide (CO). Probably acts by protecting the N(2) fixation ability of the nitrogenase complex, which is inactivated in the presence of CO. The polypeptide is N(2)-fixation sustaining protein CowN (Rhodopseudomonas palustris (strain HaA2)).